Reading from the N-terminus, the 408-residue chain is Interferon-activable protein 203 (408 aa).

The Pyrin domain occupies 1 to 87 (MAEYKNIVLL…AKKLKTEKAK (87 aa)). The interval 84 to 208 (EKAKVQEKKK…EGHHQGPKQV (125 aa)) is disordered. Basic residues predominate over residues 92–102 (KKGKCKTAGKK). A compositionally biased stretch (polar residues) spans 150 to 159 (AQLPETSGTN). An HIN-200 domain is found at 190–388 (TVPKEPSREE…SVRHSYMQVI (199 aa)).

It belongs to the HIN-200 family. Constitutively expressed in the thymus, bone marrow and spleen. Isoform 1 and isoform 3 are present in liver (at protein level).

Its subcellular location is the nucleus. The polypeptide is Interferon-activable protein 203 (Ifi203) (Mus musculus (Mouse)).